Consider the following 418-residue polypeptide: Glutamyl-tRNA reductase (418 aa).

Residues 49–52 (TCNR), Ser-109, 114–116 (EPQ), and Gln-120 contribute to the substrate site. Catalysis depends on Cys-50, which acts as the Nucleophile. 189–194 (GAGETI) is a binding site for NADP(+).

The protein belongs to the glutamyl-tRNA reductase family. In terms of assembly, homodimer.

The enzyme catalyses (S)-4-amino-5-oxopentanoate + tRNA(Glu) + NADP(+) = L-glutamyl-tRNA(Glu) + NADPH + H(+). The protein operates within porphyrin-containing compound metabolism; protoporphyrin-IX biosynthesis; 5-aminolevulinate from L-glutamyl-tRNA(Glu): step 1/2. Its function is as follows. Catalyzes the NADPH-dependent reduction of glutamyl-tRNA(Glu) to glutamate 1-semialdehyde (GSA). The chain is Glutamyl-tRNA reductase from Enterobacter sp. (strain 638).